A 318-amino-acid polypeptide reads, in one-letter code: NADH-ubiquinone oxidoreductase chain 1 (318 aa).

8 helical membrane passes run 3–23 (FMNL…LTLL), 69–89 (VLFI…WIPL), 102–122 (ILFM…SGWA), 146–166 (LAII…STLI), 171–191 (HIWL…STLA), 222–242 (LFFL…IILF), 253–273 (ELYT…FLWV), and 294–314 (LPLT…LAGI).

It belongs to the complex I subunit 1 family. Core subunit of respiratory chain NADH dehydrogenase (Complex I) which is composed of 45 different subunits.

Its subcellular location is the mitochondrion inner membrane. The catalysed reaction is a ubiquinone + NADH + 5 H(+)(in) = a ubiquinol + NAD(+) + 4 H(+)(out). Its function is as follows. Core subunit of the mitochondrial membrane respiratory chain NADH dehydrogenase (Complex I) which catalyzes electron transfer from NADH through the respiratory chain, using ubiquinone as an electron acceptor. Essential for the catalytic activity and assembly of complex I. In Cnephaeus nilssonii (Northern bat), this protein is NADH-ubiquinone oxidoreductase chain 1 (MT-ND1).